Consider the following 286-residue polypeptide: MEKLTLPAPAKLNLWLHITGRRADGYHELETVFQFLDHGDELSFSLREDGVIRLHSEIADVPHDSNLIVRAARKLQEQSGTRLGADIWLHKVLPMGGGIGGGSSDAATTLLALAHLWQLDWNEDRLAALGLALGADVPVFVRGHAAFAQGVGEQLTPVDPAEPWYVVLVPQVSVSTAEIFSHPELTRDSLPLKMRPVPEGNSRNDCQPAVEQRYPEVRNALISLGKFTEARMTGTGSCVFGAFPSKAEADRVLALLSETQTGFVAKGSNVSMLHRKLQSLIKKSSS.

Lys11 is a catalytic residue. Residue 94 to 104 (PMGGGIGGGSS) participates in ATP binding. Residue Asp136 is part of the active site.

Belongs to the GHMP kinase family. IspE subfamily.

The catalysed reaction is 4-CDP-2-C-methyl-D-erythritol + ATP = 4-CDP-2-C-methyl-D-erythritol 2-phosphate + ADP + H(+). The protein operates within isoprenoid biosynthesis; isopentenyl diphosphate biosynthesis via DXP pathway; isopentenyl diphosphate from 1-deoxy-D-xylulose 5-phosphate: step 3/6. Catalyzes the phosphorylation of the position 2 hydroxy group of 4-diphosphocytidyl-2C-methyl-D-erythritol. In Pseudomonas entomophila (strain L48), this protein is 4-diphosphocytidyl-2-C-methyl-D-erythritol kinase.